We begin with the raw amino-acid sequence, 306 residues long: Ectoine dioxygenase (306 aa).

Gln-127 is a binding site for L-ectoine. Lys-133 is a binding site for 2-oxoglutarate. His-144, Asp-146, and His-245 together coordinate Fe cation.

Belongs to the PhyH family. EctD subfamily. Homodimer. The cofactor is Fe(2+).

The catalysed reaction is L-ectoine + 2-oxoglutarate + O2 = 5-hydroxyectoine + succinate + CO2. Involved in the biosynthesis of 5-hydroxyectoine, called compatible solute, which helps organisms to survive extreme osmotic stress by acting as a highly soluble organic osmolyte. Catalyzes the 2-oxoglutarate-dependent selective hydroxylation of L-ectoine to yield (4S,5S)-5-hydroxyectoine. The protein is Ectoine dioxygenase of Sphingopyxis alaskensis (strain DSM 13593 / LMG 18877 / RB2256) (Sphingomonas alaskensis).